The chain runs to 681 residues: Serine/threonine-protein kinase PAK 6 (681 aa).

4 disordered regions span residues 1-30 (MFRK…DPKE), 149-169 (GGTP…PRVL), 200-256 (QSSP…ESSL), and 268-355 (TAAT…PRTW). The CRIB domain occupies 12 to 25 (ISAPQNFQHRVHTS). Residues 26–406 (FDPKEGKFVG…VVDQGDPRLL (381 aa)) are linker. 2 stretches are compositionally biased toward low complexity: residues 201–212 (SSPPGASPPTGT) and 268–278 (TAATAPPSSSK). Positions 308 to 333 (SLPSDQPVGTFSPLTTSDTSSPQKSL) are enriched in polar residues. In terms of domain architecture, Protein kinase spans 407 to 658 (LDSYVKIGEG…AQELLDHPFL (252 aa)). ATP contacts are provided by residues 413 to 421 (IGEGSTGIV) and Lys-436. Asp-526 (proton acceptor) is an active-site residue. Residue Ser-560 is modified to Phosphoserine; by autocatalysis.

Belongs to the protein kinase superfamily. STE Ser/Thr protein kinase family. STE20 subfamily. In terms of assembly, interacts tightly with GTP-bound but not GDP-bound CDC42/p21 and RAC1. Interacts with the androgen receptor AR and the estrogen receptor ESR1. Interacts with IQGAP1 and PPM1B. Autophosphorylated. Phosphorylated by MAP2K6//MAPKK6, leading to PAK6 activation. As to expression, selectively expressed in brain and testis, with lower levels in multiple tissues including prostate and breast.

Its subcellular location is the cytoplasm. It is found in the nucleus. The catalysed reaction is L-seryl-[protein] + ATP = O-phospho-L-seryl-[protein] + ADP + H(+). The enzyme catalyses L-threonyl-[protein] + ATP = O-phospho-L-threonyl-[protein] + ADP + H(+). In terms of biological role, serine/threonine protein kinase that plays a role in the regulation of gene transcription. The kinase activity is induced by various effectors including AR or MAP2K6/MAPKK6. Phosphorylates the DNA-binding domain of androgen receptor/AR and thereby inhibits AR-mediated transcription. Also inhibits ESR1-mediated transcription. May play a role in cytoskeleton regulation by interacting with IQGAP1. May protect cells from apoptosis through phosphorylation of BAD. The sequence is that of Serine/threonine-protein kinase PAK 6 (PAK6) from Homo sapiens (Human).